The primary structure comprises 382 residues: MYIAGVMSGTSLDGIDVALVRIEGSGVDSKVKLIHFTTVPFCNDIKSEIQQALSIENSNVQLICSLNFKLGLCFANAVKEVCKEANFSLEQLDLIGSHGQTIYHQPKPEGNMIASTLQIGEPAVIAYDTNTTVISNFRTMDMAAGGQGAPLVPYSEVILYRDPSKNRLLQNIGGIGNVTVIPSQKSDQNVIAFDTGPGNMIIDEVCQRLFQLPYDQNGEIAEQGEVVDEILTYCMNHPFLKMNPPKSTGREQFGEEFVSQLLKRYEKYSKENILTTVTMFTASSIVYHYKEFILPYYEIAEVILGGGGSYNDTLVEMIRYGLKDEKCTIFIQEDIGYSSEAKEAIAFAILANETYHRNPSNVPSATGAKKSVVLGNVTYPSI.

G9 to D16 provides a ligand contact to ATP.

The protein belongs to the anhydro-N-acetylmuramic acid kinase family.

The enzyme catalyses 1,6-anhydro-N-acetyl-beta-muramate + ATP + H2O = N-acetyl-D-muramate 6-phosphate + ADP + H(+). It functions in the pathway amino-sugar metabolism; 1,6-anhydro-N-acetylmuramate degradation. The protein operates within cell wall biogenesis; peptidoglycan recycling. In terms of biological role, catalyzes the specific phosphorylation of 1,6-anhydro-N-acetylmuramic acid (anhMurNAc) with the simultaneous cleavage of the 1,6-anhydro ring, generating MurNAc-6-P. Is required for the utilization of anhMurNAc either imported from the medium or derived from its own cell wall murein, and thus plays a role in cell wall recycling. In Bacillus cereus (strain AH187), this protein is Anhydro-N-acetylmuramic acid kinase.